The primary structure comprises 69 residues: MKIAIYKPGGSIMVWGVMAQMKVIDSSELPEYVKDGWLDHPSKLLPVEADDVKPRKGRKPKAVSDADKD.

Positions 48–69 (EADDVKPRKGRKPKAVSDADKD) are disordered.

This is an uncharacterized protein from Salmonella phage P22 (Bacteriophage P22).